We begin with the raw amino-acid sequence, 356 residues long: Alanine racemase (356 aa).

K35 functions as the Proton acceptor; specific for D-alanine in the catalytic mechanism. At K35 the chain carries N6-(pyridoxal phosphate)lysine. R130 serves as a coordination point for substrate. The active-site Proton acceptor; specific for L-alanine is the Y253. A substrate-binding site is contributed by M301.

Belongs to the alanine racemase family. Pyridoxal 5'-phosphate is required as a cofactor.

It carries out the reaction L-alanine = D-alanine. Its pathway is amino-acid biosynthesis; D-alanine biosynthesis; D-alanine from L-alanine: step 1/1. Its function is as follows. Catalyzes the interconversion of L-alanine and D-alanine. May also act on other amino acids. This chain is Alanine racemase (alr), found in Burkholderia mallei (strain NCTC 10229).